Reading from the N-terminus, the 67-residue chain is Conotoxin Cal12.1p2 (67 aa).

The propeptide occupies 1–21 (DLITNSYTRGKPRHVTSWRNL).

Contains 4 disulfide bonds. Expressed by the venom duct.

Its subcellular location is the secreted. This is Conotoxin Cal12.1p2 from Californiconus californicus (California cone).